We begin with the raw amino-acid sequence, 346 residues long: MALKALLGLSQAQLETWAKDQGLPPFRGRQLHDWLYAKGARHWHDITVLPAALRQQEPLPLGRSNELERHLAQDGTLKLLLATDDGLSLETVGIPTRDRLTVCVSSQVGCPMACRFCATGKEGLQRSLEPHEIVDQVLTVREVMQRRPSHVVFMGMGEPLLNSDHVLTAIDCLSRDLGMAMRQITVSTVGVPNTLPRLAELALERLGRAQFTLAVSLHAPDQALREELIPTARAYPYEQLLEDCRHYVAISGRRVSFEYILLGNLNDSPRQAQALAEQVRGFQSHVNLIPYNPIAEEEFQRPEPARVDAFAAALKQRGVAVSVRASRGLDQNAACGQLRRQRQGGR.

Catalysis depends on glutamate 90, which acts as the Proton acceptor. A Radical SAM core domain is found at 96–330 (TRDRLTVCVS…VSVRASRGLD (235 aa)). An intrachain disulfide couples cysteine 103 to cysteine 335. [4Fe-4S] cluster contacts are provided by cysteine 110, cysteine 114, and cysteine 117. S-adenosyl-L-methionine contacts are provided by residues 157-158 (GE), serine 187, 216-218 (SLH), and asparagine 292. Cysteine 335 functions as the S-methylcysteine intermediate in the catalytic mechanism.

This sequence belongs to the radical SAM superfamily. RlmN family. It depends on [4Fe-4S] cluster as a cofactor.

The protein resides in the cytoplasm. It catalyses the reaction adenosine(2503) in 23S rRNA + 2 reduced [2Fe-2S]-[ferredoxin] + 2 S-adenosyl-L-methionine = 2-methyladenosine(2503) in 23S rRNA + 5'-deoxyadenosine + L-methionine + 2 oxidized [2Fe-2S]-[ferredoxin] + S-adenosyl-L-homocysteine. The catalysed reaction is adenosine(37) in tRNA + 2 reduced [2Fe-2S]-[ferredoxin] + 2 S-adenosyl-L-methionine = 2-methyladenosine(37) in tRNA + 5'-deoxyadenosine + L-methionine + 2 oxidized [2Fe-2S]-[ferredoxin] + S-adenosyl-L-homocysteine. Specifically methylates position 2 of adenine 2503 in 23S rRNA and position 2 of adenine 37 in tRNAs. The protein is Probable dual-specificity RNA methyltransferase RlmN of Synechococcus sp. (strain RCC307).